Here is a 282-residue protein sequence, read N- to C-terminus: uncharacterized protein (282 aa).

In terms of domain architecture, HTH rpiR-type spans 1-77 (MNGLLRIRQR…LALSEALASQ (77 aa)). The H-T-H motif DNA-binding region spans 37 to 56 (SQQLANEAGVSQSSVVKFAQ). The SIS domain occupies 125-265 (CVTMLRSARR…FIALIQQDLE (141 aa)).

This is an uncharacterized protein from Escherichia coli (strain K12).